Here is a 245-residue protein sequence, read N- to C-terminus: MAVRASFENNCEVGCFAKLTNAYCLVAIGGSENFYSVFEGELSDAIPVVHASIAGCRIIGRMCVGNRHGLLVPNNTTDQELQHIRNSLPDSVQIRRVEERLSALGNVTTCNDYVALVHPDLDRETEEILADVLKVEVFRQTVADQVLVGSYCVFSNQGGLVHPKTSIEDQDELSSLLQVPLVAGTVNRGSEVIAAGMVVNDWCAFCGLDTTSTELSVVESVFKLNEAKPSTIATSMRDSLIDSLT.

Tyrosine 113 bears the Phosphotyrosine mark. Phosphothreonine is present on threonine 165. Serine 166 carries the post-translational modification Phosphoserine. Phosphoserine; by CK1 occurs at positions 174 and 175. Residue serine 235 is modified to Phosphoserine; by PKC. 2 positions are modified to phosphoserine: serine 239 and serine 243.

This sequence belongs to the eIF-6 family. As to quaternary structure, monomer. Associates with the 60S ribosomal subunit. Interacts with RACK1. Interacts with DICER1, AGO2, TARBP2, MOV10 and RPL7A; they form a large RNA-induced silencing complex (RISC). In terms of processing, phosphorylation at Ser-174 and Ser-175 by CSNK1D/CK1 promotes nuclear export. Ufmylated by UFL1. Detected in bladder, duodenum, liver, esophagus, pancreas, adipose tissue, megakaryocytes and testis with lower levels in muscle (at protein level).

Its subcellular location is the cytoplasm. The protein localises to the nucleus. The protein resides in the nucleolus. Binds to the 60S ribosomal subunit and prevents its association with the 40S ribosomal subunit to form the 80S initiation complex in the cytoplasm. Behaves as a stimulatory translation initiation factor downstream insulin/growth factors. Is also involved in ribosome biogenesis. Associates with pre-60S subunits in the nucleus and is involved in its nuclear export. Cytoplasmic release of TIF6 from 60S subunits and nuclear relocalization is promoted by a RACK1 (RACK1)-dependent protein kinase C activity. In tissues responsive to insulin, controls fatty acid synthesis and glycolysis by exerting translational control of adipogenic transcription factors such as CEBPB, CEBPD and ATF4 that have G/C rich or uORF in their 5'UTR. Required for ROS-dependent megakaryocyte maturation and platelets formation, controls the expression of mitochondrial respiratory chain genes involved in reactive oxygen species (ROS) synthesis. Involved in miRNA-mediated gene silencing by the RNA-induced silencing complex (RISC). Required for both miRNA-mediated translational repression and miRNA-mediated cleavage of complementary mRNAs by RISC. Modulates cell cycle progression and global translation of pre-B cells, its activation seems to be rate-limiting in tumorigenesis and tumor growth. In Mus musculus (Mouse), this protein is Eukaryotic translation initiation factor 6 (Eif6).